We begin with the raw amino-acid sequence, 492 residues long: Alpha-amylase-related protein (492 aa).

Residues 1-18 form the signal peptide; the sequence is MRLSLSVLLCLGLALTLA. Residue Gln19 is modified to Pyrrolidone carboxylic acid. A disulfide bridge links Cys46 with Cys102. Ca(2+) is bound by residues Asn116, Gln167, and Asp176. Cys155 and Cys169 are joined by a disulfide. Arg204 contributes to the chloride binding site. Asp206 (nucleophile) is an active-site residue. A Ca(2+)-binding site is contributed by His210. Residue Glu243 is the Proton donor of the active site. Positions 306 and 341 each coordinate chloride. 3 disulfide bridges follow: Cys374-Cys380, Cys416-Cys439, and Cys446-Cys458.

It belongs to the glycosyl hydrolase 13 family. Monomer. Ca(2+) is required as a cofactor. Requires chloride as cofactor.

The protein localises to the secreted. The enzyme catalyses Endohydrolysis of (1-&gt;4)-alpha-D-glucosidic linkages in polysaccharides containing three or more (1-&gt;4)-alpha-linked D-glucose units.. The sequence is that of Alpha-amylase-related protein (Amyrel) from Drosophila willistoni (Fruit fly).